The following is a 256-amino-acid chain: Imidazole glycerol phosphate synthase subunit HisF (256 aa).

Residues Asp-12 and Asp-131 contribute to the active site.

This sequence belongs to the HisA/HisF family. As to quaternary structure, heterodimer of HisH and HisF.

Its subcellular location is the cytoplasm. The enzyme catalyses 5-[(5-phospho-1-deoxy-D-ribulos-1-ylimino)methylamino]-1-(5-phospho-beta-D-ribosyl)imidazole-4-carboxamide + L-glutamine = D-erythro-1-(imidazol-4-yl)glycerol 3-phosphate + 5-amino-1-(5-phospho-beta-D-ribosyl)imidazole-4-carboxamide + L-glutamate + H(+). It functions in the pathway amino-acid biosynthesis; L-histidine biosynthesis; L-histidine from 5-phospho-alpha-D-ribose 1-diphosphate: step 5/9. In terms of biological role, IGPS catalyzes the conversion of PRFAR and glutamine to IGP, AICAR and glutamate. The HisF subunit catalyzes the cyclization activity that produces IGP and AICAR from PRFAR using the ammonia provided by the HisH subunit. The sequence is that of Imidazole glycerol phosphate synthase subunit HisF from Bifidobacterium adolescentis (strain ATCC 15703 / DSM 20083 / NCTC 11814 / E194a).